A 57-amino-acid polypeptide reads, in one-letter code: Large ribosomal subunit protein bL33 (57 aa).

It belongs to the bacterial ribosomal protein bL33 family.

The polypeptide is Large ribosomal subunit protein bL33 (Shewanella amazonensis (strain ATCC BAA-1098 / SB2B)).